The following is a 572-amino-acid chain: Serine/threonine-protein kinase pak-1 (572 aa).

2 disordered regions span residues 1–71 (MKAF…SRPS) and 156–195 (QPYS…QGVP). The region spanning 67-80 (ISRPSNFEHTIHVG) is the CRIB domain. Residues 81–294 (YDPKTGEFTG…IVSIGNPDRK (214 aa)) are linker. A compositionally biased stretch (polar residues) spans 178 to 195 (PMTTSTSSAGYNSKQGVP). Positions 295–546 (YRKVDKIGSG…ASQLLTHPFL (252 aa)) constitute a Protein kinase domain. ATP is bound by residues 301 to 309 (IGSGASGSV) and Lys324. The Proton acceptor role is filled by Asp414.

The protein belongs to the protein kinase superfamily. STE Ser/Thr protein kinase family. STE20 subfamily. Interacts with cdc-42 (GTP-bound form) and cedd-10 (GTP-bound form). Mg(2+) is required as a cofactor. The cofactor is Mn(2+). Specifically colocalized with cdc-42 and ced-10 at all hypodermal cell boundaries during embryo elongation throughout the second phase of embryogenesis. Expressed mainly in pharyngeal muscles, the CAN neurons, motor neurons in the ventral nerve cord, several cells in the tail region (including the B and Y cells from L1 to adult, the hypodermal blast cell T in the L1 and some of its progeny in later stages), and the distal tip cells.

The protein resides in the cell membrane. Its subcellular location is the cytoplasm. It is found in the cell projection. It localises to the axon. The protein localises to the perikaryon. The enzyme catalyses L-seryl-[protein] + ATP = O-phospho-L-seryl-[protein] + ADP + H(+). The catalysed reaction is L-threonyl-[protein] + ATP = O-phospho-L-threonyl-[protein] + ADP + H(+). Functionally, required for hypodermal cell fusion, together with cdc-42 and ced-10, leading to embryonic body elongation, which involves dramatic cytoskeletal reorganization. Plays a redundant role with max-2 in dorsal axonal guidance in ventral cord commissural motoneurons and in P neuroblast migration. Acts probably downstream of Rho GTPases mig-2 and ced-10 to regulate these 2 processes. Involved in orientating axonal growth of HSN neurons. During gonad morphogenesis and probably in association with pix-1 and git-1, involved in the migration of distal tip cell (DTC) and in maintaining their sharp tapering morphology. In addition, plays a redundant role with max-2 in DTC-mediated guidance of gonad elongation. May phosphorylate mlc-4. In Caenorhabditis elegans, this protein is Serine/threonine-protein kinase pak-1 (pak-1).